Reading from the N-terminus, the 347-residue chain is NADH-ubiquinone oxidoreductase chain 2 (347 aa).

11 helical membrane-spanning segments follow: residues P3–S23, H25–M45, Y59–L79, I96–P116, I122–L142, I149–G169, I178–P198, M201–L221, M237–L257, E274–M294, and F325–I345.

It belongs to the complex I subunit 2 family. Core subunit of respiratory chain NADH dehydrogenase (Complex I) which is composed of 45 different subunits. Interacts with TMEM242.

The protein resides in the mitochondrion inner membrane. The catalysed reaction is a ubiquinone + NADH + 5 H(+)(in) = a ubiquinol + NAD(+) + 4 H(+)(out). Its function is as follows. Core subunit of the mitochondrial membrane respiratory chain NADH dehydrogenase (Complex I) which catalyzes electron transfer from NADH through the respiratory chain, using ubiquinone as an electron acceptor. Essential for the catalytic activity and assembly of complex I. The sequence is that of NADH-ubiquinone oxidoreductase chain 2 from Genetta servalina (Servaline genet).